A 515-amino-acid chain; its full sequence is Carboxyl-terminal-processing peptidase 2, chloroplastic (515 aa).

Positions Phe198 to Gly286 constitute a PDZ domain. Catalysis depends on charge relay system residues Ser417 and Lys442.

Belongs to the peptidase S41A family.

The protein localises to the plastid. Its subcellular location is the chloroplast thylakoid lumen. The catalysed reaction is The enzyme shows specific recognition of a C-terminal tripeptide, Xaa-Yaa-Zaa, in which Xaa is preferably Ala or Leu, Yaa is preferably Ala or Tyr, and Zaa is preferably Ala, but then cleaves at a variable distance from the C-terminus. A typical cleavage is -Ala-Ala-|-Arg-Ala-Ala-Lys-Glu-Asn-Tyr-Ala-Leu-Ala-Ala.. Protease involved in the C-terminal processing of the chloroplastic D1 protein of photosystem II. This proteolytic processing is necessary to allow the light-driven assembly of the tetranuclear manganese cluster, which is responsible for photosynthetic water oxidation. The sequence is that of Carboxyl-terminal-processing peptidase 2, chloroplastic (CTPA2) from Arabidopsis thaliana (Mouse-ear cress).